The following is a 765-amino-acid chain: Transcription factor RFX3 (765 aa).

Positions 189-264 form a DNA-binding region, RFX-type winged-helix; that stretch reads HLQWLLDNYE…YHYYGIRVKP (76 aa).

It belongs to the RFX family.

The protein localises to the nucleus. Its function is as follows. Transcription factor required for ciliogenesis and islet cell differentiation during endocrine pancreas development. The sequence is that of Transcription factor RFX3 (rfx3) from Danio rerio (Zebrafish).